The primary structure comprises 98 residues: NADH-ubiquinone oxidoreductase chain 4L (98 aa).

Helical transmembrane passes span 1-21 (MPLI…GMLV), 29-49 (SLLC…LMTL), and 58-78 (IMPI…LALL).

This sequence belongs to the complex I subunit 4L family. Core subunit of respiratory chain NADH dehydrogenase (Complex I) which is composed of 45 different subunits.

It is found in the mitochondrion inner membrane. It carries out the reaction a ubiquinone + NADH + 5 H(+)(in) = a ubiquinol + NAD(+) + 4 H(+)(out). Core subunit of the mitochondrial membrane respiratory chain NADH dehydrogenase (Complex I) which catalyzes electron transfer from NADH through the respiratory chain, using ubiquinone as an electron acceptor. Part of the enzyme membrane arm which is embedded in the lipid bilayer and involved in proton translocation. This Pongo abelii (Sumatran orangutan) protein is NADH-ubiquinone oxidoreductase chain 4L (MT-ND4L).